The primary structure comprises 201 residues: Imidazoleglycerol-phosphate dehydratase (201 aa).

The protein belongs to the imidazoleglycerol-phosphate dehydratase family.

It is found in the cytoplasm. It catalyses the reaction D-erythro-1-(imidazol-4-yl)glycerol 3-phosphate = 3-(imidazol-4-yl)-2-oxopropyl phosphate + H2O. It participates in amino-acid biosynthesis; L-histidine biosynthesis; L-histidine from 5-phospho-alpha-D-ribose 1-diphosphate: step 6/9. This is Imidazoleglycerol-phosphate dehydratase from Prochlorococcus marinus (strain MIT 9515).